We begin with the raw amino-acid sequence, 385 residues long: Methylthioribose-1-phosphate isomerase (385 aa).

Asp-256 functions as the Proton donor in the catalytic mechanism.

It belongs to the eIF-2B alpha/beta/delta subunits family. MtnA subfamily.

It localises to the cytoplasm. The protein localises to the nucleus. It carries out the reaction 5-(methylsulfanyl)-alpha-D-ribose 1-phosphate = 5-(methylsulfanyl)-D-ribulose 1-phosphate. It functions in the pathway amino-acid biosynthesis; L-methionine biosynthesis via salvage pathway; L-methionine from S-methyl-5-thio-alpha-D-ribose 1-phosphate: step 1/6. Its function is as follows. Catalyzes the interconversion of methylthioribose-1-phosphate (MTR-1-P) into methylthioribulose-1-phosphate (MTRu-1-P). The protein is Methylthioribose-1-phosphate isomerase of Arthroderma otae (strain ATCC MYA-4605 / CBS 113480) (Microsporum canis).